We begin with the raw amino-acid sequence, 25 residues long: Superoxide dismutase [Mn], mitochondrial (25 aa).

Histidine 9 contributes to the Mn(2+) binding site.

This sequence belongs to the iron/manganese superoxide dismutase family. Homotetramer. The cofactor is Mn(2+).

It is found in the mitochondrion matrix. The enzyme catalyses 2 superoxide + 2 H(+) = H2O2 + O2. In terms of biological role, destroys superoxide anion radicals which are normally produced within the cells and which are toxic to biological systems. In Alternaria alternata (Alternaria rot fungus), this protein is Superoxide dismutase [Mn], mitochondrial.